A 305-amino-acid polypeptide reads, in one-letter code: Methionyl-tRNA formyltransferase (305 aa).

A (6S)-5,6,7,8-tetrahydrofolate-binding site is contributed by 108–111; the sequence is SLLP.

The protein belongs to the Fmt family.

The enzyme catalyses L-methionyl-tRNA(fMet) + (6R)-10-formyltetrahydrofolate = N-formyl-L-methionyl-tRNA(fMet) + (6S)-5,6,7,8-tetrahydrofolate + H(+). Its function is as follows. Attaches a formyl group to the free amino group of methionyl-tRNA(fMet). The formyl group appears to play a dual role in the initiator identity of N-formylmethionyl-tRNA by promoting its recognition by IF2 and preventing the misappropriation of this tRNA by the elongation apparatus. The sequence is that of Methionyl-tRNA formyltransferase from Thermus thermophilus (strain ATCC 27634 / DSM 579 / HB8).